The chain runs to 152 residues: Sec-independent protein translocase protein TatB (152 aa).

The helical transmembrane segment at 1–21 (MFDVAPSELLLVAVVALVVIG) threads the bilayer. Positions 60-71 (EDMEKRWAEENA) are enriched in basic and acidic residues. The interval 60–152 (EDMEKRWAEE…KEADQQEKQS (93 aa)) is disordered. Low complexity-rich tracts occupy residues 84-98 (TASTSSPATPSPVSD) and 124-140 (AANHTETTATTAASTPA). Residues 141–152 (KPKEADQQEKQS) show a composition bias toward basic and acidic residues.

This sequence belongs to the TatB family. As to quaternary structure, the Tat system comprises two distinct complexes: a TatABC complex, containing multiple copies of TatA, TatB and TatC subunits, and a separate TatA complex, containing only TatA subunits. Substrates initially bind to the TatABC complex, which probably triggers association of the separate TatA complex to form the active translocon.

It is found in the cell inner membrane. In terms of biological role, part of the twin-arginine translocation (Tat) system that transports large folded proteins containing a characteristic twin-arginine motif in their signal peptide across membranes. Together with TatC, TatB is part of a receptor directly interacting with Tat signal peptides. TatB may form an oligomeric binding site that transiently accommodates folded Tat precursor proteins before their translocation. This chain is Sec-independent protein translocase protein TatB, found in Zymomonas mobilis subsp. mobilis (strain ATCC 31821 / ZM4 / CP4).